The chain runs to 492 residues: 1-aminocyclopropane-1-carboxylate synthase 1 (492 aa).

Lys277 is modified (N6-(pyridoxal phosphate)lysine).

This sequence belongs to the class-I pyridoxal-phosphate-dependent aminotransferase family. Homodimer. Pyridoxal 5'-phosphate serves as cofactor.

The catalysed reaction is S-adenosyl-L-methionine = 1-aminocyclopropane-1-carboxylate + S-methyl-5'-thioadenosine + H(+). It functions in the pathway alkene biosynthesis; ethylene biosynthesis via S-adenosyl-L-methionine; ethylene from S-adenosyl-L-methionine: step 1/2. In terms of biological role, catalyzes the formation of 1-aminocyclopropane-1-carboxylate, a direct precursor of ethylene in higher plants. In Prunus mume (Japanese apricot), this protein is 1-aminocyclopropane-1-carboxylate synthase 1 (ACS1).